The sequence spans 119 residues: Holo-[acyl-carrier-protein] synthase (119 aa).

Mg(2+)-binding residues include D8 and E59.

The protein belongs to the P-Pant transferase superfamily. AcpS family. It depends on Mg(2+) as a cofactor.

Its subcellular location is the cytoplasm. It catalyses the reaction apo-[ACP] + CoA = holo-[ACP] + adenosine 3',5'-bisphosphate + H(+). In terms of biological role, transfers the 4'-phosphopantetheine moiety from coenzyme A to a Ser of acyl-carrier-protein. The chain is Holo-[acyl-carrier-protein] synthase from Lactococcus lactis subsp. cremoris (strain SK11).